The chain runs to 1037 residues: Multidrug resistance protein MdtF (1037 aa).

Over 1–9 (MANYFIDRP) the chain is Cytoplasmic. Residues 10–28 (VFAWVLAIIMMLAGGLAIM) form a helical membrane-spanning segment. Over 29-339 (NLPVAQYPQI…TPFIEISIQE (311 aa)) the chain is Periplasmic. The chain crosses the membrane as a helical span at residues 340-359 (VFKTLVEAIILVFLVMYLFL). Topologically, residues 360–365 (QNFRAT) are cytoplasmic. A helical transmembrane segment spans residues 366 to 385 (IIPTIAVPVVILGTFAILSA). Over 386-391 (VGFTIN) the chain is Periplasmic. A helical transmembrane segment spans residues 392–413 (TLTMFGMVLAIGLLVDDAIVVV). The Cytoplasmic portion of the chain corresponds to 414-441 (ENVERVIAEDKLPPKEATHKSMGQIQRA). A helical membrane pass occupies residues 442–460 (LVGIAVVLSAVFMPMAFMS). The Periplasmic portion of the chain corresponds to 461–473 (GATGEIYRQFSIT). Residues 474-496 (LISSMLLSVFVAMSLTPALCATI) form a helical membrane-spanning segment. The Cytoplasmic segment spans residues 497–536 (LKAAPEGGHKPNALFARFNTLFEKSTQHYTDSTRSLLRCT). Residues 537-555 (GRYMVVYLLICAGMAVLFL) traverse the membrane as a helical segment. The Periplasmic portion of the chain corresponds to 556–870 (RTPTSFLPEE…SYQEALSSNQ (315 aa)). Residues 871–890 (APALYAISLVVVFLALAALY) traverse the membrane as a helical segment. At 891–896 (ESWSIP) the chain is on the cytoplasmic side. Residues 897 to 916 (FSVMLVVPLGVVGALLATDL) traverse the membrane as a helical segment. Over 917–922 (RGLSND) the chain is Periplasmic. A helical transmembrane segment spans residues 923 to 944 (VYFQVGLLTTIGLSAKNAILIV). Residues 945–972 (EFAVEMMQKEGKTPIEAIIEAARMRLRP) are Cytoplasmic-facing. A helical membrane pass occupies residues 973–991 (ILMTSLAFILGVLPLVISH). Residues 992–1004 (GAGSGAQNAVGTG) are Periplasmic-facing. Residues 1005 to 1027 (VMGGMFAATVLAIYFVPVFFVVV) form a helical membrane-spanning segment. Residues 1028–1037 (EHLFARFKKA) are Cytoplasmic-facing.

The protein belongs to the resistance-nodulation-cell division (RND) (TC 2.A.6) family. As to quaternary structure, homotrimer. Part of the tripartite efflux system MdtEF-TolC, which is composed of an inner membrane transporter, MdtF, a membrane fusion protein, MdtE, and an outer membrane component, TolC. The complex forms a large protein conduit and can translocate molecules across both the inner and outer membranes.

Its subcellular location is the cell inner membrane. Its function is as follows. Part of the tripartite efflux system MdtEF-TolC, which confers resistance to compounds such as rhodamine 6G, erythromycin, doxorubicin, ethidium bromide, TPP, SDS, deoxycholate, crystal violet and benzalkonium. The chain is Multidrug resistance protein MdtF (mdtF) from Escherichia coli (strain K12).